Here is a 220-residue protein sequence, read N- to C-terminus: MSETTETQNTAGLKLNGLFAFKEGMATIYNENGEAVPVTVLRYEPWFVSQIKTNEADGYEAIQVACHPKKAKNSNKAEKGHLEKAGFENGAQFVKELRQAAPEGTVVGAQISIDSLAKGDFVKITSKSKGKGFAGSVKRWGFAGGPASHGSKFHRRPGSSGNRTWPGRVMPGKKFPGHLGAETVTVKNVEVVQIIAEENVLMVKGPVPGARNTLVKLVRE.

The tract at residues 145-169 (GPASHGSKFHRRPGSSGNRTWPGRV) is disordered.

This sequence belongs to the universal ribosomal protein uL3 family. In terms of assembly, part of the 50S ribosomal subunit. Forms a cluster with proteins L14 and L19.

Its function is as follows. One of the primary rRNA binding proteins, it binds directly near the 3'-end of the 23S rRNA, where it nucleates assembly of the 50S subunit. The sequence is that of Large ribosomal subunit protein uL3 from Bdellovibrio bacteriovorus (strain ATCC 15356 / DSM 50701 / NCIMB 9529 / HD100).